Consider the following 309-residue polypeptide: Taste receptor type 2 member 113 (309 aa).

The Extracellular portion of the chain corresponds to M1–P10. A helical transmembrane segment spans residues I11–V31. Over C32 to R55 the chain is Cytoplasmic. Residues I56–H76 traverse the membrane as a helical segment. Over E77–K80 the chain is Extracellular. A helical transmembrane segment spans residues M81–A101. Over N102–K127 the chain is Cytoplasmic. Residues N128 to I148 form a helical membrane-spanning segment. Residues K149–M185 lie on the Extracellular side of the membrane. N162 carries an N-linked (GlcNAc...) asparagine glycan. A helical membrane pass occupies residues F186–W206. The Cytoplasmic segment spans residues R207–R229. Residues A230 to V250 form a helical membrane-spanning segment. Residues K251 to L262 lie on the Extracellular side of the membrane. The chain crosses the membrane as a helical span at residues I263 to I283. Residues L284–V309 are Cytoplasmic-facing.

The protein belongs to the G-protein coupled receptor T2R family.

It localises to the membrane. In terms of biological role, putative taste receptor which may play a role in the perception of bitterness. The polypeptide is Taste receptor type 2 member 113 (Mus musculus (Mouse)).